The sequence spans 969 residues: Manganese resistance protein MNR2 (969 aa).

Residues 1 to 11 (MSTDNSQKDEG) are compositionally biased toward basic and acidic residues. Disordered stretches follow at residues 1–49 (MSTD…SRRP), 96–153 (GAFI…DLSP), 167–186 (HKSFVDENSPTDRRQSNANN), and 199–256 (VNNN…NNSS). Residues 1–912 (MSTDNSQKDE…DMNDVLGKIT (912 aa)) are Cytoplasmic-facing. The segment covering 13-23 (PLLSPYSSSPQ) has biased composition (low complexity). Residues 24–36 (LRKKKRNQKRRKD) are compositionally biased toward basic residues. Basic and acidic residues predominate over residues 37–48 (KFVGHLKSDSRR). At serine 114 the chain carries Phosphoserine. Residues 141–152 (SDQNRSLVSDLS) show a composition bias toward polar residues. At serine 175 the chain carries Phosphoserine. Threonine 177 is modified (phosphothreonine). The residue at position 182 (serine 182) is a Phosphoserine. Composition is skewed to low complexity over residues 225-234 (NKNSKSTSSD) and 244-256 (SRPSSSLSSNNSS). Residue serine 383 is modified to Phosphoserine. 2 disordered regions span residues 559-662 (VRRR…KPRE) and 746-769 (QSDDSSDSDSSDSDSDSGASDEDA). Over residues 565-578 (EKQESATLDHESIS) the composition is skewed to basic and acidic residues. Threonine 571 is subject to Phosphothreonine. A phosphoserine mark is found at serine 576 and serine 582. Low complexity-rich tracts occupy residues 590-607 (SNESNANNNNSTSNASRS) and 622-632 (ANRTTNTSSSS). A compositionally biased stretch (acidic residues) spans 749 to 769 (DSSDSDSSDSDSDSGASDEDA). Residues 913-933 (ILGTIVLPMNVITGLWGMNVI) traverse the membrane as a helical segment. Residues 934-941 (VPGQYRDS) are Extracellular-facing. A helical membrane pass occupies residues 942–962 (LTWFIGIVLFMCMLACSAYMY). At 963–969 (TKRRFGF) the chain is on the cytoplasmic side.

It belongs to the CorA metal ion transporter (MIT) (TC 1.A.35) family.

The protein localises to the membrane. The sequence is that of Manganese resistance protein MNR2 (MNR2) from Saccharomyces cerevisiae (strain ATCC 204508 / S288c) (Baker's yeast).